A 350-amino-acid polypeptide reads, in one-letter code: Ribosomal RNA large subunit methyltransferase M (350 aa).

Residues 217–220 (APGG), Asp-236, Asp-256, and Asp-272 each bind S-adenosyl-L-methionine. Lys-301 serves as the catalytic Proton acceptor.

This sequence belongs to the class I-like SAM-binding methyltransferase superfamily. RNA methyltransferase RlmE family. RlmM subfamily. Monomer.

The protein resides in the cytoplasm. It catalyses the reaction cytidine(2498) in 23S rRNA + S-adenosyl-L-methionine = 2'-O-methylcytidine(2498) in 23S rRNA + S-adenosyl-L-homocysteine + H(+). In terms of biological role, catalyzes the 2'-O-methylation at nucleotide C2498 in 23S rRNA. The sequence is that of Ribosomal RNA large subunit methyltransferase M from Teredinibacter turnerae (strain ATCC 39867 / T7901).